We begin with the raw amino-acid sequence, 764 residues long: Polyadenylate-binding protein, cytoplasmic and nuclear (764 aa).

The segment at 36–56 (VPEAQAEGAEAAPTPTAAPHP) is disordered. RRM domains are found at residues 60-138 (ASLY…WSQR), 148-225 (GNIF…HHIP), 241-318 (TNVY…RAQK), and 344-462 (VNLY…LAQR). Disordered stretches follow at residues 375–420 (VMRD…GDRK) and 587–634 (GRGG…PRGN). 2 stretches are compositionally biased toward basic and acidic residues: residues 387–399 (KDEK…KEGE) and 408–420 (GSEK…GDRK). Gly residues predominate over residues 587-596 (GRGGPAGRGP). Over residues 597-613 (QGIPAGIPQGLQGGPAV) the composition is skewed to low complexity. The PABC domain maps to 657 to 734 (GSFLQAQLAT…ALAVYDEYLK (78 aa)). Positions 735–745 (TQGQQPTQQPA) are enriched in polar residues. The disordered stretch occupies residues 735–764 (TQGQQPTQQPAEANGEQPKAEEQKPEEQKA). Over residues 752 to 764 (PKAEEQKPEEQKA) the composition is skewed to basic and acidic residues.

This sequence belongs to the polyadenylate-binding protein type-1 family.

The protein localises to the cytoplasm. Its subcellular location is the nucleus. In terms of biological role, binds the poly(A) tail of mRNA. Appears to be an important mediator of the multiple roles of the poly(A) tail in mRNA biogenesis, stability and translation. In the nucleus, involved in both mRNA cleavage and polyadenylation. Is also required for efficient mRNA export to the cytoplasm. Acts in concert with a poly(A)-specific nuclease (PAN) to affect poly(A) tail shortening, which may occur concomitantly with either nucleocytoplasmic mRNA transport or translational initiation. In the cytoplasm, stimulates translation initiation and regulates mRNA decay through translation termination-coupled poly(A) shortening, probably mediated by PAN. The chain is Polyadenylate-binding protein, cytoplasmic and nuclear (pabp-1) from Neurospora crassa (strain ATCC 24698 / 74-OR23-1A / CBS 708.71 / DSM 1257 / FGSC 987).